The primary structure comprises 275 residues: Coagulation factor IX (275 aa).

Tyr-23 is subject to Sulfotyrosine. Asn-25 carries an N-linked (GlcNAc...) asparagine glycan. Thr-27 carries the post-translational modification Phosphothreonine. Asn-35 carries an N-linked (GlcNAc...) asparagine glycan. Residue Thr-47 is glycosylated (O-linked (GalNAc...) threonine). The Peptidase S1 domain maps to 49-275 (IVGGENAKPG…YTRVSWYVNW (227 aa)). A disulfide bridge connects residues Cys-74 and Cys-90. Residue His-89 is the Charge relay system of the active site. N-linked (GlcNAc...) asparagine glycosylation is present at Asn-96. Glu-103, Asn-105, Glu-108, Glu-110, and Glu-113 together coordinate Ca(2+). A glycan (N-linked (GlcNAc...) asparagine) is linked at Asn-128. Asp-137 (charge relay system) is an active-site residue. Cystine bridges form between Cys-204–Cys-218 and Cys-229–Cys-257. Catalysis depends on Ser-233, which acts as the Charge relay system.

Belongs to the peptidase S1 family. In terms of assembly, heterodimer of a light chain and a heavy chain; disulfide-linked. Interacts (inactive and activated) with F11 (activated) in calcium-dependent manner. Interacts with SERPINC1. Post-translationally, activated by factor XIa, which excises the activation peptide. The propeptide can also be removed by snake venom protease. Activated by coagulation factor VIIa-tissue factor (F7-F3) complex in calcium-dependent manner.

The protein resides in the secreted. It carries out the reaction Selective cleavage of Arg-|-Ile bond in factor X to form factor Xa.. Functionally, factor IX is a vitamin K-dependent plasma protein that participates in the intrinsic pathway of blood coagulation by converting factor X to its active form in the presence of Ca(2+) ions, phospholipids, and factor VIIIa. The sequence is that of Coagulation factor IX (F9) from Oryctolagus cuniculus (Rabbit).